The primary structure comprises 437 residues: Oxysterol-binding protein homolog 7 (437 aa).

A compositionally biased stretch (polar residues) spans 23–32; that stretch reads IASNAANSKP. The disordered stretch occupies residues 23–42; sequence IASNAANSKPSGADTDDIDE. Residues 54 to 393 are OSBP-related domain (ORD); that stretch reads IISQLKPGCD…EDLDYYIYKH (340 aa). A 1,2-diacyl-sn-glycero-3-phospho-(1D-myo-inositol 4-phosphate)-binding positions include 64–69, 126–129, and 157–158; these read LSRITL, KPLN, and HH. Residues 64 to 69 and Asn129 each bind a 1,2-diacyl-sn-glycero-3-phospho-L-serine; that span reads LSRITL. An a 1,2-diacyl-sn-glycero-3-phospho-L-serine-binding site is contributed by Ser183. A Glycyl lysine isopeptide (Lys-Gly) (interchain with G-Cter in ubiquitin) cross-link involves residue Lys276. A 1,2-diacyl-sn-glycero-3-phospho-(1D-myo-inositol 4-phosphate) contacts are provided by Lys351, Glu355, and Arg359.

The protein belongs to the OSBP family. In terms of assembly, interacts with the AAA ATPase VPS4; regulates OSH7 membrane association. VPS4 is required for membrane dissociation of OSH7.

The protein resides in the cytoplasm. It localises to the cell membrane. Its subcellular location is the endoplasmic reticulum membrane. The catalysed reaction is a 1,2-diacyl-sn-glycero-3-phospho-L-serine(in) = a 1,2-diacyl-sn-glycero-3-phospho-L-serine(out). Its function is as follows. ipid transport protein (LTP) involved in non-vesicular transfer of lipids between membranes. Functions in phosphoinositide-coupled directional transport of various lipids by carrying the lipid molecule in a hydrophobic pocket and transferring it between membranes through the cytosol. Involved in maintenance of intracellular sterol distribution and homeostasis. Involved in lipid countertransport between the endoplasmic reticulum and the plasma membrane. Specifically exchanges phosphatidylserine with phosphatidylinositol 4-phosphate (PI4P), delivering phosphatidylserine to the PM in exchange for PI4P, which is delivered to the ER-localized PI4P phosphatase SAC1 for degradation. Thus, by maintaining a PI4P gradient at the ER/PM interface, SAC1 drives PS transport. Binds phosphatidylserine and PI4P in a mutually exclusive manner. This Saccharomyces cerevisiae (strain ATCC 204508 / S288c) (Baker's yeast) protein is Oxysterol-binding protein homolog 7.